The following is an 867-amino-acid chain: DNA endonuclease RBBP8 (867 aa).

An essential for binding to the MRN complex and for RPA focus formation on DNA damage region spans residues 25-48 (ELWSKLKECHDKELQELLLKINKL). Coiled-coil stretches lie at residues 38 to 87 (LQEL…EDRL) and 120 to 141 (ITEL…SEQL). Disordered regions lie at residues 141–171 (LHNM…PDSP) and 448–486 (RYGK…HSML). Over residues 154–166 (ENPADTGEGEDGV) the composition is skewed to acidic residues. The short motif at 489–493 (PLDLS) is the PXDLS motif element. The segment at 508-531 (SSRGRTKQTFALVPEKPDPKKPLH) is damage-recruitment motif. Phosphothreonine occurs at positions 817 and 829. The segment at 843–867 (SPCQRPRRRQPYNAKFSSKIKEQKT) is disordered.

This sequence belongs to the COM1/SAE2/CtIP family. Homotetramer; formed by antiparallel association of helical extensions protruding from the N-termini of two parallel coiled-coil dimers. Interacts with the MRN complex; the interaction links DNA sensing to resection. Interacts with samhd1. Phosphorylation at Thr-817 and Thr-829 promote interaction with nbn and recruitment to double-strand breaks (DSBs).

It localises to the nucleus. Its subcellular location is the chromosome. Endonuclease that cooperates with the MRE11-RAD50-NBN (MRN) complex in DNA-end resection, the first step of double-strand break (DSB) repair through the homologous recombination (HR) pathway. Functions downstream of the MRN complex and ATM, promotes ATR activation and its recruitment to DSBs in the S/G2 phase facilitating the generation of ssDNA. Specifically promotes the endonuclease activity of the MRN complex to clear DNA ends containing protein adducts: recruited to DSBs by nbn following phosphorylation, and promotes the endonuclease of mre11 to clear protein-DNA adducts and generate clean double-strand break ends. The polypeptide is DNA endonuclease RBBP8 (rbbp8) (Xenopus tropicalis (Western clawed frog)).